A 151-amino-acid chain; its full sequence is ALKEIRMDNEREGFPITAIREIKILKKLHHENVIKLKEIVTSPGPEKDDQGRPDGNKYKRLAIYMVFEYMDHDLTGLADRPGMRFTVPQIKCYMRQLLTGLHYCHVNQVLHRDIKGSNLLIDNEGNLKLADFGLARSFSNEIMQTLQIESL.

Residues 1 to 151 (ALKEIRMDNE…IMQTLQIESL (151 aa)) form the Protein kinase domain. K3 provides a ligand contact to ATP. The active-site Proton acceptor is D113.

It belongs to the protein kinase superfamily. CMGC Ser/Thr protein kinase family. CDC2/CDKX subfamily.

The catalysed reaction is L-seryl-[protein] + ATP = O-phospho-L-seryl-[protein] + ADP + H(+). The enzyme catalyses L-threonyl-[protein] + ATP = O-phospho-L-threonyl-[protein] + ADP + H(+). It catalyses the reaction [DNA-directed RNA polymerase] + ATP = phospho-[DNA-directed RNA polymerase] + ADP + H(+). In Pisum sativum (Garden pea), this protein is Cell division control protein 2 homolog 2.